We begin with the raw amino-acid sequence, 223 residues long: Large ribosomal subunit protein bL25 (223 aa).

Residues 198 to 223 form a disordered region; it reads EEIGDRPRSAEEGAAPVKERKLRESE.

It belongs to the bacterial ribosomal protein bL25 family. CTC subfamily. As to quaternary structure, part of the 50S ribosomal subunit; part of the 5S rRNA/L5/L18/L25 subcomplex. Contacts the 5S rRNA. Binds to the 5S rRNA independently of L5 and L18.

Functionally, this is one of the proteins that binds to the 5S RNA in the ribosome where it forms part of the central protuberance. This Thermomicrobium roseum (strain ATCC 27502 / DSM 5159 / P-2) protein is Large ribosomal subunit protein bL25.